We begin with the raw amino-acid sequence, 312 residues long: Glycerol-3-phosphate dehydrogenase [NAD(P)+] (312 aa).

Residues W11, R30, R31, and K95 each contribute to the NADPH site. K95, G123, and S125 together coordinate sn-glycerol 3-phosphate. Residue A127 participates in NADPH binding. K177, D230, S240, R241, and N242 together coordinate sn-glycerol 3-phosphate. The Proton acceptor role is filled by K177. R241 is a binding site for NADPH. NADPH is bound by residues V265 and E267.

This sequence belongs to the NAD-dependent glycerol-3-phosphate dehydrogenase family.

The protein resides in the cytoplasm. It catalyses the reaction sn-glycerol 3-phosphate + NAD(+) = dihydroxyacetone phosphate + NADH + H(+). It carries out the reaction sn-glycerol 3-phosphate + NADP(+) = dihydroxyacetone phosphate + NADPH + H(+). It participates in membrane lipid metabolism; glycerophospholipid metabolism. In terms of biological role, catalyzes the reduction of the glycolytic intermediate dihydroxyacetone phosphate (DHAP) to sn-glycerol 3-phosphate (G3P), the key precursor for phospholipid synthesis. This chain is Glycerol-3-phosphate dehydrogenase [NAD(P)+], found in Helicobacter pylori (strain Shi470).